The following is a 196-amino-acid chain: uncharacterized protein (196 aa).

The protein to E.coli YjaG.

This is an uncharacterized protein from Haemophilus influenzae (strain ATCC 51907 / DSM 11121 / KW20 / Rd).